The following is a 433-amino-acid chain: Glutamate-1-semialdehyde 2,1-aminomutase (433 aa).

Residue lysine 272 is modified to N6-(pyridoxal phosphate)lysine.

It belongs to the class-III pyridoxal-phosphate-dependent aminotransferase family. HemL subfamily. As to quaternary structure, homodimer. Requires pyridoxal 5'-phosphate as cofactor.

Its subcellular location is the cytoplasm. It carries out the reaction (S)-4-amino-5-oxopentanoate = 5-aminolevulinate. The protein operates within porphyrin-containing compound metabolism; protoporphyrin-IX biosynthesis; 5-aminolevulinate from L-glutamyl-tRNA(Glu): step 2/2. Its pathway is porphyrin-containing compound metabolism; chlorophyll biosynthesis. In Synechococcus sp. (strain WH7803), this protein is Glutamate-1-semialdehyde 2,1-aminomutase.